Consider the following 214-residue polypeptide: Large ribosomal subunit protein uL4 (214 aa).

The segment at 56 to 86 (THKVKNRAEVSGTGKKPWKQKSTGKARAGSK) is disordered. Residues 71-85 (KPWKQKSTGKARAGS) are compositionally biased toward basic residues.

It belongs to the universal ribosomal protein uL4 family. In terms of assembly, part of the 50S ribosomal subunit.

In terms of biological role, one of the primary rRNA binding proteins, this protein initially binds near the 5'-end of the 23S rRNA. It is important during the early stages of 50S assembly. It makes multiple contacts with different domains of the 23S rRNA in the assembled 50S subunit and ribosome. Functionally, forms part of the polypeptide exit tunnel. This chain is Large ribosomal subunit protein uL4, found in Mesomycoplasma hyopneumoniae (strain 232) (Mycoplasma hyopneumoniae).